The sequence spans 279 residues: RxLR effector protein Avh331 (279 aa).

An N-terminal signal peptide occupies residues 1–20 (MMQWSAILIRTCFSGSGGEA). Positions 86–106 (RSLRSQATNVDDDANVSIENR) match the RxLR-dEER motif. N-linked (GlcNAc...) asparagine glycosylation occurs at asparagine 100. The segment at 129–147 (ANKLWLMADVDPKSAFKLL) is W1 motif. The tract at residues 153 to 174 (GVRFIDNPKMLQWLKFTKAYLD) is Y1 motif. The segment at 178–208 (SGFGETSAHALLYEKIGGPDLSLLLLSLKDA) is l motif. The interval 222–240 (QFGMWHDARIEPEQLAQTV) is W2 motif. A Y2 motif region spans residues 250 to 271 (PKNDPKLQVIDDYAKYHRKHRK).

It belongs to the RxLR effector family.

It is found in the secreted. Its subcellular location is the host cell. Functionally, effector that suppresses the host mitogen-activated protein kinase (MAPK)-based plant defense activated by the Phytophthora elicitor to promote colonization of the Phytophthora pathogen. Neither directly inhibits MAPK kinase activity nor interacts with MAPK proteins but acts downstream by suppressing transcriptional activation of resistance marker genes such as FRK1, WRKY22 and WRKY29. Confers avirulence in the presence of resistance protein Rps1k in host. The sequence is that of RxLR effector protein Avh331 from Phytophthora sojae (strain P6497) (Soybean stem and root rot agent).